The primary structure comprises 156 residues: 6,7-dimethyl-8-ribityllumazine synthase (156 aa).

5-amino-6-(D-ribitylamino)uracil contacts are provided by residues F22, 57–59, and 81–83; these read AYE and TVI. 86 to 87 is a (2S)-2-hydroxy-3-oxobutyl phosphate binding site; sequence GT. Residue H89 is the Proton donor of the active site. Residue F114 coordinates 5-amino-6-(D-ribitylamino)uracil. R128 contributes to the (2S)-2-hydroxy-3-oxobutyl phosphate binding site.

This sequence belongs to the DMRL synthase family. Forms an icosahedral capsid composed of 60 subunits, arranged as a dodecamer of pentamers.

The catalysed reaction is (2S)-2-hydroxy-3-oxobutyl phosphate + 5-amino-6-(D-ribitylamino)uracil = 6,7-dimethyl-8-(1-D-ribityl)lumazine + phosphate + 2 H2O + H(+). The protein operates within cofactor biosynthesis; riboflavin biosynthesis; riboflavin from 2-hydroxy-3-oxobutyl phosphate and 5-amino-6-(D-ribitylamino)uracil: step 1/2. Functionally, catalyzes the formation of 6,7-dimethyl-8-ribityllumazine by condensation of 5-amino-6-(D-ribitylamino)uracil with 3,4-dihydroxy-2-butanone 4-phosphate. This is the penultimate step in the biosynthesis of riboflavin. The chain is 6,7-dimethyl-8-ribityllumazine synthase from Edwardsiella ictaluri (strain 93-146).